The primary structure comprises 313 residues: MEKRLLDFEVGETVELFLLIKSSIKGTASNGKPFLSLVLQDKSGELEAKLWDVKESDEVNYGVQQIVHLIGDIQNYRGRKQLKIRQIRQATPLDGVNASEFMETAPINKEEMADEITQYIFEMKNANLQRITRALLKKYQDDFYDYPAAMRHHHEFVSGLSFHVVSMLRLAKAVSDLYPTVNRDLLYAGVILHDLGKVIELSGPVSTTYTLEGNLIGHISIVVEEVSKIADELSIDDEEVVVLKHVLLSHHGKGEWGSPKPPLVREAEILHQIDLMDASINMMDKVLKHTKPGEFSERVFGLDNRSFYNPTFE.

Residues 163-279 (HVVSMLRLAK…LHQIDLMDAS (117 aa)) form the HD domain.

It belongs to the YhaM family.

Shows a 3'-5' exoribonuclease activity. The polypeptide is 3'-5' exoribonuclease YhaM (Listeria welshimeri serovar 6b (strain ATCC 35897 / DSM 20650 / CCUG 15529 / CIP 8149 / NCTC 11857 / SLCC 5334 / V8)).